We begin with the raw amino-acid sequence, 294 residues long: Phosphatidylserine decarboxylase proenzyme (294 aa).

Residues aspartate 100, histidine 157, and serine 261 each act as charge relay system; for autoendoproteolytic cleavage activity in the active site. The active-site Schiff-base intermediate with substrate; via pyruvic acid; for decarboxylase activity is the serine 261. Serine 261 carries the post-translational modification Pyruvic acid (Ser); by autocatalysis.

Belongs to the phosphatidylserine decarboxylase family. PSD-B subfamily. Prokaryotic type I sub-subfamily. In terms of assembly, heterodimer of a large membrane-associated beta subunit and a small pyruvoyl-containing alpha subunit. It depends on pyruvate as a cofactor. Post-translationally, is synthesized initially as an inactive proenzyme. Formation of the active enzyme involves a self-maturation process in which the active site pyruvoyl group is generated from an internal serine residue via an autocatalytic post-translational modification. Two non-identical subunits are generated from the proenzyme in this reaction, and the pyruvate is formed at the N-terminus of the alpha chain, which is derived from the carboxyl end of the proenzyme. The autoendoproteolytic cleavage occurs by a canonical serine protease mechanism, in which the side chain hydroxyl group of the serine supplies its oxygen atom to form the C-terminus of the beta chain, while the remainder of the serine residue undergoes an oxidative deamination to produce ammonia and the pyruvoyl prosthetic group on the alpha chain. During this reaction, the Ser that is part of the protease active site of the proenzyme becomes the pyruvoyl prosthetic group, which constitutes an essential element of the active site of the mature decarboxylase.

The protein resides in the cell membrane. It catalyses the reaction a 1,2-diacyl-sn-glycero-3-phospho-L-serine + H(+) = a 1,2-diacyl-sn-glycero-3-phosphoethanolamine + CO2. It participates in phospholipid metabolism; phosphatidylethanolamine biosynthesis; phosphatidylethanolamine from CDP-diacylglycerol: step 2/2. In terms of biological role, catalyzes the formation of phosphatidylethanolamine (PtdEtn) from phosphatidylserine (PtdSer). This Mannheimia succiniciproducens (strain KCTC 0769BP / MBEL55E) protein is Phosphatidylserine decarboxylase proenzyme.